Reading from the N-terminus, the 212-residue chain is Ras-related protein Rab-2A (212 aa).

Positions 16, 17, 18, 19, 20, 21, and 38 each coordinate GTP. Ser-20 contributes to the Mg(2+) binding site. The Switch 1 signature appears at 37 to 42; the sequence is LTIGVE. 2 residues coordinate Mg(2+): Thr-38 and Asp-61. The Switch 2 motif lies at 63–72; sequence AGQESFRSIT. Positions 64, 119, 120, 122, 150, and 151 each coordinate GTP. S-geranylgeranyl cysteine attachment occurs at residues Cys-211 and Cys-212.

It belongs to the small GTPase superfamily. Rab family. As to quaternary structure, interacts with PRKCI. Interacts with TRIP11. Interacts (in GTP-bound form) with GARIN1B. Mg(2+) serves as cofactor. Post-translationally, prenylated. Prenylation is required for association with cellular membranes.

Its subcellular location is the endoplasmic reticulum-Golgi intermediate compartment membrane. It is found in the melanosome. The protein resides in the endoplasmic reticulum membrane. It localises to the golgi apparatus membrane. The protein localises to the cytoplasmic vesicle. Its subcellular location is the secretory vesicle. It is found in the acrosome. The catalysed reaction is GTP + H2O = GDP + phosphate + H(+). With respect to regulation, regulated by guanine nucleotide exchange factors (GEFs) which promote the exchange of bound GDP for free GTP, GTPase activating proteins (GAPs) which increase the GTP hydrolysis activity, and GDP dissociation inhibitors (GDIs) which inhibit the dissociation of the nucleotide from the GTPase. Functionally, the small GTPases Rab are key regulators of intracellular membrane trafficking, from the formation of transport vesicles to their fusion with membranes. Rabs cycle between active GTP-bound and inactive GDP-bound states. In their active state, drive transport of vesicular carriers from donor organelles to acceptor organelles to regulate the membrane traffic that maintains organelle identity and morphology. RAB2A regulates autophagy by promoting autophagosome-lysosome fusion via recruitment of the HOPS endosomal tethering complex; this process involves autophagosomal RAB2A and lysosomal RAB39A recruitment of HOPS subcomplexes VPS39-VPS11 and VPS41-VPS16-VPS18-VPS33A, respectively, which assemble into a functional complex to mediate membrane tethering and SNAREs-driven membrane fusion. Required for protein transport from the endoplasmic reticulum to the Golgi complex. Regulates the compacted morphology of the Golgi. Together with RAB2B, redundantly required for efficient autophagic flux. In Gallus gallus (Chicken), this protein is Ras-related protein Rab-2A (RAB2A).